A 129-amino-acid polypeptide reads, in one-letter code: Translation initiation factor 5A (129 aa).

Lysine 36 is subject to Hypusine.

Belongs to the eIF-5A family.

The protein resides in the cytoplasm. Functionally, functions by promoting the formation of the first peptide bond. The polypeptide is Translation initiation factor 5A (eIF5A) (Methanobrevibacter smithii (strain ATCC 35061 / DSM 861 / OCM 144 / PS)).